The primary structure comprises 269 residues: Cytolethal distending toxin subunit B homolog (269 aa).

Residues 1 to 22 (MKKPVFFLLTMIICSYISFACA) form the signal peptide.

The protein localises to the secreted. Its function is as follows. Produces a CDT (cytolethal distending toxin) activity, which causes DNA damage in intoxicated cells. This damage induces G2/M cell cycle arrest, chromatin fragmentation, cell distention and nucleus enlargement. In Salmonella typhi, this protein is Cytolethal distending toxin subunit B homolog (cdtB).